We begin with the raw amino-acid sequence, 492 residues long: Pyrin and HIN domain-containing protein 1 (492 aa).

A Pyrin domain is found at Met1–Lys88. Disordered regions lie at residues Lys106–Ala199 and Lys400–Pro492. Over residues Pro142 to Thr159 the composition is skewed to basic and acidic residues. A compositionally biased stretch (polar residues) spans Arg160–Met173. Positions Thr181–Ser194 are enriched in low complexity. An HIN-200 domain is found at Ala199 to Gln399. Composition is skewed to polar residues over residues Gln416–Pro432 and Gly460–Pro492.

This sequence belongs to the HIN-200 family. As to quaternary structure, interacts with MDM2. Expressed in spleen, lymph node and peripheral blood leukocytes, and at lower levels in thymus, bone marrow and fetal liver. Down-regulated in breast tumors.

It localises to the nucleus. It is found in the nucleoplasm. Its subcellular location is the nucleus speckle. In terms of biological role, major mediator of the tumor suppressor activity of IFN in breast cancer cells. Promotes ubiquitination and subsequent degradation of MDM2, which leads to p53/TP53 stabilization. Promotes ubiquitination and subsequent degradation of HDAC1, which in turn enhances maspin expression, and impairs invasive activity of cancer cells. The protein is Pyrin and HIN domain-containing protein 1 (PYHIN1) of Homo sapiens (Human).